The sequence spans 193 residues: Copper-binding lipoprotein NosL (193 aa).

The signal sequence occupies residues 1 to 19; that stretch reads MRTRLRFVLVAAALALLSA. Residue C20 is the site of N-palmitoyl cysteine attachment. C20 carries the S-diacylglycerol cysteine lipid modification.

It belongs to the NosL family. Monomer. Apo-NosL can form homodimers.

It is found in the cell membrane. Its function is as follows. May act as a metallochaperone involved in nitrous oxide reductase assembly. Specifically binds Cu(+). The protein is Copper-binding lipoprotein NosL of Achromobacter cycloclastes.